A 418-amino-acid chain; its full sequence is ATP phosphoribosyltransferase regulatory subunit (418 aa).

The protein belongs to the class-II aminoacyl-tRNA synthetase family. HisZ subfamily. Heteromultimer composed of HisG and HisZ subunits.

Its subcellular location is the cytoplasm. The protein operates within amino-acid biosynthesis; L-histidine biosynthesis; L-histidine from 5-phospho-alpha-D-ribose 1-diphosphate: step 1/9. In terms of biological role, required for the first step of histidine biosynthesis. May allow the feedback regulation of ATP phosphoribosyltransferase activity by histidine. The chain is ATP phosphoribosyltransferase regulatory subunit from Acetivibrio thermocellus (strain ATCC 27405 / DSM 1237 / JCM 9322 / NBRC 103400 / NCIMB 10682 / NRRL B-4536 / VPI 7372) (Clostridium thermocellum).